A 555-amino-acid chain; its full sequence is MFS-type transporter VdtG (555 aa).

The interval 1–20 is disordered; sequence MNGNGTADKPGPPGGKPFGP. N4 is a glycosylation site (N-linked (GlcNAc...) asparagine). 3 helical membrane passes run 30-50, 71-91, and 101-121; these read TGFK…LTAL, DIGW…LLFG, and WVFL…GAAP. N122 carries N-linked (GlcNAc...) asparagine glycosylation. 2 consecutive transmembrane segments (helical) span residues 132-152 and 162-182; these read IAGL…FFTV and GIAG…GGGF. N-linked (GlcNAc...) asparagine glycosylation is present at N185. The next 4 helical transmembrane spans lie at 190–210, 232–252, 262–282, and 304–324; these read WCFY…LLFL, LGNL…QWGG, IVAL…VQLW, and AFTI…PIWF. N329 is a glycosylation site (N-linked (GlcNAc...) asparagine). Helical transmembrane passes span 337-357, 364-384, 393-413, 425-445, and 497-517; these read VMML…GFII, TPFM…LTTF, WIGY…QASL, PIGI…FLAV, and LMDV…AAAF. The tract at residues 528-555 is disordered; the sequence is AAGPGGPGGPGGPGGPGGPEGLRGGNKV. Residues 530 to 555 show a composition bias toward gly residues; it reads GPGGPGGPGGPGGPGGPEGLRGGNKV.

Belongs to the major facilitator superfamily. TCR/Tet family.

It localises to the endoplasmic reticulum membrane. Functionally, MFS-type transporter; part of the gene cluster that mediates the biosynthesis of viriditoxin, one of the 'classical' secondary metabolites produced by fungi and that has antibacterial activity. Is not essential for viriditoxin production. This chain is MFS-type transporter VdtG, found in Byssochlamys spectabilis (Paecilomyces variotii).